The following is a 407-amino-acid chain: MKRAFIMVLDSFGIGATEDADRFGDVGSDTMGHIAEACAKGEADIGRQGPLNLPNLTRLGLVKAHEGSTGKVAAGMDANAEVVGAYAWAHELSSGKDTPSGHWEIAGVPVLFDWGYFSDHENSFPQKLLDKLVERGNLPGYLGNCHSSGTVILDQLGEEHMKTGKPIFYTSADSVFQIACHEETFGLDRLYELCEIAREELTEGGYNIGRVIARPFIGNKPGEFQRTGNRHDLAVEPPAATVLQKLVDEKDGQVVSVGKIADIYANCGITKKVKATGLDALFDATVKEMKEAGDKTIVFTNFVDFDSSWGHRRDIAGYAAGLELFDRRLPELMELVGEDDILILTADHGCDPSWTGTDHTREHIPVLVYGPKVKPGSLGHRETFADIGQTIASYFGTSPMDYGKNML.

Residues D10, D306, H311, D347, H348, and H359 each coordinate Mn(2+).

It belongs to the phosphopentomutase family. Mn(2+) is required as a cofactor.

It is found in the cytoplasm. It catalyses the reaction 2-deoxy-alpha-D-ribose 1-phosphate = 2-deoxy-D-ribose 5-phosphate. The catalysed reaction is alpha-D-ribose 1-phosphate = D-ribose 5-phosphate. Its pathway is carbohydrate degradation; 2-deoxy-D-ribose 1-phosphate degradation; D-glyceraldehyde 3-phosphate and acetaldehyde from 2-deoxy-alpha-D-ribose 1-phosphate: step 1/2. Functionally, isomerase that catalyzes the conversion of deoxy-ribose 1-phosphate (dRib-1-P) and ribose 1-phosphate (Rib-1-P) to deoxy-ribose 5-phosphate (dRib-5-P) and ribose 5-phosphate (Rib-5-P), respectively. The sequence is that of Phosphopentomutase from Enterobacter sp. (strain 638).